A 153-amino-acid polypeptide reads, in one-letter code: Natriuretic peptides A (153 aa).

The signal sequence occupies residues 1–25 (MGSFSTIMASFLLFLAFQLQGQTRA). Propeptides lie at residues 26–123 (NPVY…AAPR) and 93–103 (DGGALGRGSWD). The segment at 54–105 (EDEVMPPQVLSDQSEEERAALSPLPEVPPWTGEVNPAQRDGGALGRGSWDSS) is disordered. Phosphoserine is present on Ser-129. Cysteines 130 and 146 form a disulfide. An important for degradation of atrial natriuretic peptide by IDE region spans residues 147–151 (NSFRY).

Belongs to the natriuretic peptide family. In terms of assembly, homodimer; disulfide-linked antiparallel dimer. The precursor molecule is proteolytically cleaved by CORIN at Arg-123 to produce the atrial natriuretic peptide. Undergoes further proteolytic cleavage by unknown proteases to give rise to long-acting natriuretic peptide, vessel dilator and kaliuretic peptide. Additional processing gives rise to the auriculin and atriopeptin peptides. In the kidneys, alternative processing by an unknown protease results in the peptide urodilatin. Post-translationally, cleavage by MME initiates degradation of the factor and thereby regulates its activity. Degradation by IDE results in reduced activation of NPR1 (in vitro). During IDE degradation, the resulting products can temporarily stimulate NPR2 to produce cGMP, before the fragments are completely degraded and inactivated by IDE (in vitro). In terms of processing, degraded by IDE. Phosphorylation on Ser-129 decreases vasorelaxant activity.

It localises to the secreted. It is found in the perikaryon. The protein localises to the cell projection. Functionally, hormone that plays a key role in mediating cardio-renal homeostasis, and is involved in vascular remodeling and regulating energy metabolism. Acts by specifically binding and stimulating NPR1 to produce cGMP, which in turn activates effector proteins, such as PRKG1, that drive various biological responses. Regulates vasodilation, natriuresis, diuresis and aldosterone synthesis and is therefore essential for regulating blood pressure, controlling the extracellular fluid volume and maintaining the fluid-electrolyte balance. Also involved in inhibiting cardiac remodeling and cardiac hypertrophy by inducing cardiomyocyte apoptosis and attenuating the growth of cardiomyocytes and fibroblasts. Plays a role in female pregnancy by promoting trophoblast invasion and spiral artery remodeling in uterus, and thus prevents pregnancy-induced hypertension. In adipose tissue, acts in various cGMP- and PKG-dependent pathways to regulate lipid metabolism and energy homeostasis. This includes up-regulating lipid metabolism and mitochondrial oxygen utilization by activating the AMP-activated protein kinase (AMPK), and increasing energy expenditure by acting via MAPK11 to promote the UCP1-dependent thermogenesis of brown adipose tissue. Binds the clearance receptor NPR3 which removes the hormone from circulation. Its function is as follows. May have a role in cardio-renal homeostasis through regulation of natriuresis, diuresis, vasodilation, and inhibiting aldosterone synthesis. In vitro, promotes the production of cGMP and induces vasodilation. May promote natriuresis, at least in part, by enhancing prostaglandin E2 synthesis resulting in the inhibition of renal Na+-K+-ATPase. However reports on the involvement of this peptide in mammal blood volume and blood pressure homeostasis are conflicting; according to a report, in vivo it is not sufficient to activate cGMP and does not inhibit collecting duct transport nor effect diuresis and natriuresis. Appears to bind to specific receptors that are distinct from the receptors bound by atrial natriuretic peptide and vessel dilator. Possibly enhances protein excretion in urine by decreasing proximal tubular protein reabsorption. May have a role in cardio-renal homeostasis through regulation of natriuresis, diuresis, and vasodilation. In vitro, promotes the production of cGMP and induces vasodilation. May promote natriuresis, at least in part, by enhancing prostaglandin E2 synthesis resulting in the inhibition of renal Na+-K+-ATPase. However reports on the involvement of this peptide in mammal blood volume and blood pressure homeostasis are conflicting; according to a report it is not sufficient to activate cGMP and does not inhibit collecting duct transport nor effect diuresis and natriuresis. Appears to bind to specific receptors that are distinct from the receptors bound by the atrial natriuretic and long-acting natriuretic peptides. Possibly functions in protein excretion in urine by maintaining the integrity of the proximal tubules and enhancing protein excretion by decreasing proximal tubular protein reabsorption. In terms of biological role, may have a role in cardio-renal homeostasis through regulation of diuresis and inhibiting aldosterone synthesis. In vitro, promotes the production of cGMP and induces vasodilation. May promote natriuresis, at least in part, by enhancing prostaglandin E2 synthesis resulting in the inhibition of renal Na+-K+-ATPase. May have a role in potassium excretion but not sodium excretion (natriuresis). Possibly enhances protein excretion in urine by decreasing proximal tubular protein reabsorption. Functionally, hormone produced in the kidneys that appears to be important for maintaining cardio-renal homeostasis. Mediates vasodilation, natriuresis and diuresis primarily in the renal system, in order to maintain the extracellular fluid volume and control the fluid-electrolyte balance. Specifically binds and stimulates cGMP production by renal transmembrane receptors, likely NPR1. Urodilatin not ANP, may be the natriuretic peptide responsible for the regulation of sodium and water homeostasis in the kidney. Its function is as follows. May have a role in cardio-renal homeostasis through regulation of natriuresis and vasodilation. In vivo promotes natriuresis and in vitro, vasodilates renal artery strips. May have a role in cardio-renal homeostasis through regulation of regulation of natriuresis and vasodilation. In vivo promotes natriuresis. In vitro, vasodilates intestinal smooth muscle but not smooth muscle strips. In terms of biological role, may have a role in cardio-renal homeostasis through regulation of natriuresis and vasodilation. In vivo promotes natriuresis. In vitro, selectively vasodilates intestinal and vascular smooth muscle strips. Functionally, may have a role in cardio-renal homeostasis through regulation of natriuresis and vasodilation. In vivo promotes natriuresis. In vitro, selectively vasodilates intestinal smooth muscle but not vascular smooth muscle strips. The chain is Natriuretic peptides A (NPPA) from Equus caballus (Horse).